Consider the following 505-residue polypeptide: Deoxyguanosinetriphosphate triphosphohydrolase (505 aa).

An HD domain is found at 66-273 (RLTHSMEVQQ…MEAADDISYC (208 aa)).

Belongs to the dGTPase family. Type 1 subfamily. As to quaternary structure, homotetramer. Requires Mg(2+) as cofactor.

It carries out the reaction dGTP + H2O = 2'-deoxyguanosine + triphosphate + H(+). DGTPase preferentially hydrolyzes dGTP over the other canonical NTPs. This is Deoxyguanosinetriphosphate triphosphohydrolase from Escherichia fergusonii (strain ATCC 35469 / DSM 13698 / CCUG 18766 / IAM 14443 / JCM 21226 / LMG 7866 / NBRC 102419 / NCTC 12128 / CDC 0568-73).